The following is a 278-amino-acid chain: Small ribosomal subunit protein uS3 (278 aa).

Positions 38–106 (IRKLLSKGME…QVQLNILEVK (69 aa)) constitute a KH type-2 domain. The segment at 213–278 (RQAQAAARAG…APAPAENQEG (66 aa)) is disordered. The span at 214 to 223 (QAQAAARAGV) shows a compositional bias: low complexity. The segment covering 232-253 (RGGERPSRGSRGDRPTRADRGG) has biased composition (basic and acidic residues). Residues 259-278 (EATGAATEQAAPAPAENQEG) show a composition bias toward low complexity.

This sequence belongs to the universal ribosomal protein uS3 family. As to quaternary structure, part of the 30S ribosomal subunit. Forms a tight complex with proteins S10 and S14.

Functionally, binds the lower part of the 30S subunit head. Binds mRNA in the 70S ribosome, positioning it for translation. In Nocardioides sp. (strain ATCC BAA-499 / JS614), this protein is Small ribosomal subunit protein uS3.